Consider the following 317-residue polypeptide: Enoyl-CoA delta isomerase 3, peroxisomal (317 aa).

The ACB domain maps to 1-46 (MPKPGVFNFVNKATWDARNALGSLPKETARKNYVDLVSSLSSSSEA). The disordered stretch occupies residues 40-60 (LSSSSEAPSQGKRGADEKARE). Residue 120–124 (SGNDL) coordinates substrate. The Microbody targeting signal motif lies at 315–317 (AKL).

The protein belongs to the enoyl-CoA hydratase/isomerase family. As to expression, expressed at high levels in the kidney. Also detected at very low levels in the duodenum, jejunum, ileum, heart, liver, lung, and brown adipose tissue (at protein level). In the kidney, expression seems to be localized mainly to the proximal tubule.

The protein resides in the peroxisome. The catalysed reaction is a (3Z)-enoyl-CoA = a 4-saturated (2E)-enoyl-CoA. It catalyses the reaction a (3E)-enoyl-CoA = a 4-saturated (2E)-enoyl-CoA. It carries out the reaction (3E)-nonenoyl-CoA = (2E)-nonenoyl-CoA. Functionally, catalyzes the isomerization of trans-3-nonenoyl-CoA into trans-2-nonenoyl-CoA. May also have activity towards other enoyl-CoA species. The protein is Enoyl-CoA delta isomerase 3, peroxisomal of Mus musculus (Mouse).